Reading from the N-terminus, the 560-residue chain is Membrane protein insertase YidC (560 aa).

6 helical membrane passes run 5–25 (IINLIAAIVLSLSIIFGWQYF), 334–354 (AIDFGWFYIITKPVFYAMNFF), 357–377 (YVGNFGVSILIVTVIIKLLMF), 431–451 (LPILVQIPVFFSIYKVLYVTI), 476–496 (LFGLLPFSPPSFLMIGAWPIL), and 522–542 (FMPLIFLFMFSSFPVGLLIYW).

It belongs to the OXA1/ALB3/YidC family. Type 1 subfamily. Interacts with the Sec translocase complex via SecD. Specifically interacts with transmembrane segments of nascent integral membrane proteins during membrane integration.

Its subcellular location is the cell inner membrane. Required for the insertion and/or proper folding and/or complex formation of integral membrane proteins into the membrane. Involved in integration of membrane proteins that insert both dependently and independently of the Sec translocase complex, as well as at least some lipoproteins. Aids folding of multispanning membrane proteins. This Rickettsia akari (strain Hartford) protein is Membrane protein insertase YidC.